The primary structure comprises 467 residues: 3-isopropylmalate dehydratase large subunit (467 aa).

Residues cysteine 347, cysteine 407, and cysteine 410 each contribute to the [4Fe-4S] cluster site.

The protein belongs to the aconitase/IPM isomerase family. LeuC type 1 subfamily. In terms of assembly, heterodimer of LeuC and LeuD. [4Fe-4S] cluster is required as a cofactor.

The catalysed reaction is (2R,3S)-3-isopropylmalate = (2S)-2-isopropylmalate. Its pathway is amino-acid biosynthesis; L-leucine biosynthesis; L-leucine from 3-methyl-2-oxobutanoate: step 2/4. In terms of biological role, catalyzes the isomerization between 2-isopropylmalate and 3-isopropylmalate, via the formation of 2-isopropylmaleate. In Trichormus variabilis (strain ATCC 29413 / PCC 7937) (Anabaena variabilis), this protein is 3-isopropylmalate dehydratase large subunit.